The following is a 170-amino-acid chain: Bifunctional protein PyrR (170 aa).

The PRPP-binding motif lies at 90–102; sequence LVLVDDVLMSGRT.

This sequence belongs to the purine/pyrimidine phosphoribosyltransferase family. PyrR subfamily.

The enzyme catalyses UMP + diphosphate = 5-phospho-alpha-D-ribose 1-diphosphate + uracil. Regulates the transcription of the pyrimidine nucleotide (pyr) operon in response to exogenous pyrimidines. Its function is as follows. Also displays a weak uracil phosphoribosyltransferase activity which is not physiologically significant. The polypeptide is Bifunctional protein PyrR (Pseudomonas aeruginosa (strain LESB58)).